A 282-amino-acid chain; its full sequence is Bifunctional protein FolD (282 aa).

NADP(+)-binding positions include 167–169 (GRS) and Ser-192.

It belongs to the tetrahydrofolate dehydrogenase/cyclohydrolase family. Homodimer.

It carries out the reaction (6R)-5,10-methylene-5,6,7,8-tetrahydrofolate + NADP(+) = (6R)-5,10-methenyltetrahydrofolate + NADPH. The enzyme catalyses (6R)-5,10-methenyltetrahydrofolate + H2O = (6R)-10-formyltetrahydrofolate + H(+). Its pathway is one-carbon metabolism; tetrahydrofolate interconversion. Its function is as follows. Catalyzes the oxidation of 5,10-methylenetetrahydrofolate to 5,10-methenyltetrahydrofolate and then the hydrolysis of 5,10-methenyltetrahydrofolate to 10-formyltetrahydrofolate. The protein is Bifunctional protein FolD of Acidobacterium capsulatum (strain ATCC 51196 / DSM 11244 / BCRC 80197 / JCM 7670 / NBRC 15755 / NCIMB 13165 / 161).